Consider the following 208-residue polypeptide: MKVVEVKHPLVRHKIGLMREGDISTKRFRELAAEVGSLLTYEATADFETETVTIEGWNGPVEVDQIKGKKVTVVPILRAGLGMMDGVLEHIPSARISVVGIYRDEETLEPVPYFEKLASDMNERIALVVDPMLATGGSMIATVDLLKKRGCTSIKALVLVAAPEGIKALEAAHPDIELYTAAIDRCLNEKGYILPGLGDAGDKIFGTK.

5-phospho-alpha-D-ribose 1-diphosphate-binding positions include arginine 78, arginine 103, and 130–138; that span reads DPMLATGGS. Uracil is bound by residues isoleucine 193 and 198 to 200; that span reads GDA. Aspartate 199 is a binding site for 5-phospho-alpha-D-ribose 1-diphosphate.

This sequence belongs to the UPRTase family. The cofactor is Mg(2+).

The catalysed reaction is UMP + diphosphate = 5-phospho-alpha-D-ribose 1-diphosphate + uracil. Its pathway is pyrimidine metabolism; UMP biosynthesis via salvage pathway; UMP from uracil: step 1/1. With respect to regulation, allosterically activated by GTP. In terms of biological role, catalyzes the conversion of uracil and 5-phospho-alpha-D-ribose 1-diphosphate (PRPP) to UMP and diphosphate. This chain is Uracil phosphoribosyltransferase, found in Shewanella putrefaciens (strain CN-32 / ATCC BAA-453).